The primary structure comprises 467 residues: Ribosomal protein uS12 methylthiotransferase RimO (467 aa).

The disordered stretch occupies residues 1–27 (MTSNPPDLRPDLAPKPTFGTAPRPDQP). The MTTase N-terminal domain occupies 27–137 (PTLGMVSLGC…VLDAVHAAVP (111 aa)). Positions 36, 72, 101, 168, 172, and 175 each coordinate [4Fe-4S] cluster. Residues 154–397 (LTPRHFSYLK…MEKAQAISEA (244 aa)) enclose the Radical SAM core domain. Positions 400–467 (ASKVGQTLQV…GEYDLWGALR (68 aa)) constitute a TRAM domain.

Belongs to the methylthiotransferase family. RimO subfamily. [4Fe-4S] cluster is required as a cofactor.

Its subcellular location is the cytoplasm. It carries out the reaction L-aspartate(89)-[ribosomal protein uS12]-hydrogen + (sulfur carrier)-SH + AH2 + 2 S-adenosyl-L-methionine = 3-methylsulfanyl-L-aspartate(89)-[ribosomal protein uS12]-hydrogen + (sulfur carrier)-H + 5'-deoxyadenosine + L-methionine + A + S-adenosyl-L-homocysteine + 2 H(+). Functionally, catalyzes the methylthiolation of an aspartic acid residue of ribosomal protein uS12. This chain is Ribosomal protein uS12 methylthiotransferase RimO, found in Ruegeria sp. (strain TM1040) (Silicibacter sp.).